A 90-amino-acid chain; its full sequence is Small ribosomal subunit protein uS15c (90 aa).

This sequence belongs to the universal ribosomal protein uS15 family. Part of the 30S ribosomal subunit.

The protein localises to the plastid. It localises to the chloroplast. This chain is Small ribosomal subunit protein uS15c (rps15), found in Mesostigma viride (Green alga).